Here is a 199-residue protein sequence, read N- to C-terminus: Recombination protein RecR (199 aa).

The C4-type zinc-finger motif lies at 60-75 (CARCHTFTEGEVCSTC). The Toprim domain occupies 83-178 (SRLAVVETPA…HVTRLARGVP (96 aa)).

The protein belongs to the RecR family.

In terms of biological role, may play a role in DNA repair. It seems to be involved in an RecBC-independent recombinational process of DNA repair. It may act with RecF and RecO. The protein is Recombination protein RecR of Paracidovorax citrulli (strain AAC00-1) (Acidovorax citrulli).